Consider the following 291-residue polypeptide: Acetylglutamate kinase (291 aa).

Substrate is bound by residues 65–66 (GG), Arg87, and Asn186.

This sequence belongs to the acetylglutamate kinase family. ArgB subfamily.

The protein resides in the cytoplasm. It carries out the reaction N-acetyl-L-glutamate + ATP = N-acetyl-L-glutamyl 5-phosphate + ADP. It functions in the pathway amino-acid biosynthesis; L-arginine biosynthesis; N(2)-acetyl-L-ornithine from L-glutamate: step 2/4. In terms of biological role, catalyzes the ATP-dependent phosphorylation of N-acetyl-L-glutamate. In Mycolicibacterium vanbaalenii (strain DSM 7251 / JCM 13017 / BCRC 16820 / KCTC 9966 / NRRL B-24157 / PYR-1) (Mycobacterium vanbaalenii), this protein is Acetylglutamate kinase.